The sequence spans 592 residues: Aspartate--tRNA(Asp/Asn) ligase (592 aa).

Glu175 lines the L-aspartate pocket. An aspartate region spans residues 199–202 (QLFK). Arg221 is an L-aspartate binding site. Residues 221-223 (RDE) and Gln230 contribute to the ATP site. L-aspartate is bound at residue His450. An ATP-binding site is contributed by Glu483. Residue Arg490 participates in L-aspartate binding. 535–538 (GLDR) is an ATP binding site.

This sequence belongs to the class-II aminoacyl-tRNA synthetase family. Type 1 subfamily. Homodimer.

The protein resides in the cytoplasm. It catalyses the reaction tRNA(Asx) + L-aspartate + ATP = L-aspartyl-tRNA(Asx) + AMP + diphosphate. Aspartyl-tRNA synthetase with relaxed tRNA specificity since it is able to aspartylate not only its cognate tRNA(Asp) but also tRNA(Asn). Reaction proceeds in two steps: L-aspartate is first activated by ATP to form Asp-AMP and then transferred to the acceptor end of tRNA(Asp/Asn). The protein is Aspartate--tRNA(Asp/Asn) ligase of Acinetobacter baumannii (strain ATCC 17978 / DSM 105126 / CIP 53.77 / LMG 1025 / NCDC KC755 / 5377).